The chain runs to 170 residues: Superoxide dismutase [Fe] (170 aa).

Residues His27, His81, Asp163, and His167 each contribute to the Fe cation site.

It belongs to the iron/manganese superoxide dismutase family. In terms of assembly, homodimer. Fe cation serves as cofactor.

The catalysed reaction is 2 superoxide + 2 H(+) = H2O2 + O2. In terms of biological role, destroys superoxide anion radicals which are normally produced within the cells and which are toxic to biological systems. The polypeptide is Superoxide dismutase [Fe] (sodA) (Raoultella planticola (Klebsiella planticola)).